The sequence spans 474 residues: MGSDGLQWVSRSLEHRPMTSLWRDIRHEVAAWLGSLKLAIGLFLAIAAASIAGTVIPQGESTDFYRQNYPDSGAVVWGFVTWRFIISLGLDEVYRSWWFVALLLLLATSLTICTFRRQIPMLKAAQNWKFYTEPRQLSKYALRTAIPARGTGPLAEQLRAGRYKVYQRDDLIYATKGTIGRVGPIVVHVSLLLIMAGAMIGAFGGYQTQRMTLAGDSFDIQQVEQSRLSLARPPDWTVRVNKFWIDYRPDGSVDQFHSDLSVVSPAGKELERKTISVNDPLIYDGVTMYQASWAVGAFKLRLNDSPVLTIPMQPIEAPNGQEAWGQAIPFDKDGRVALQMVTRGLQGSLMLLPFNPRTGETVREAATPARVGKPVSVLGQRLVIEELVGQTGIQIKADPGIPVVYAGFALLMVGLAMSYLSHSQVWAIYRDGQLHVAGRTNRAQIGFERELVRMVAAVQTPRPRTSDALSAAQE.

The next 3 helical transmembrane spans lie at 36-56 (LKLAIGLFLAIAAASIAGTVI), 96-116 (SWWFVALLLLLATSLTICTFR), and 182-202 (VGPIVVHVSLLLIMAGAMIGA).

The protein belongs to the Ccs1/CcsB family. May interact with CcsA.

It localises to the cell inner membrane. Functionally, required during biogenesis of c-type cytochromes (cytochrome c6 and cytochrome f) at the step of heme attachment. The polypeptide is Cytochrome c biogenesis protein CcsB (Gloeobacter violaceus (strain ATCC 29082 / PCC 7421)).